Here is a 293-residue protein sequence, read N- to C-terminus: Diaminopimelate epimerase (293 aa).

Substrate-binding residues include asparagine 15, glutamine 47, and asparagine 67. Catalysis depends on cysteine 76, which acts as the Proton donor. Substrate contacts are provided by residues 77-78 (GN), asparagine 163, asparagine 197, and 215-216 (ER). Cysteine 224 acts as the Proton acceptor in catalysis. 225-226 (GS) is a substrate binding site.

Belongs to the diaminopimelate epimerase family. Homodimer.

It localises to the cytoplasm. The catalysed reaction is (2S,6S)-2,6-diaminopimelate = meso-2,6-diaminopimelate. It functions in the pathway amino-acid biosynthesis; L-lysine biosynthesis via DAP pathway; DL-2,6-diaminopimelate from LL-2,6-diaminopimelate: step 1/1. Its function is as follows. Catalyzes the stereoinversion of LL-2,6-diaminopimelate (L,L-DAP) to meso-diaminopimelate (meso-DAP), a precursor of L-lysine and an essential component of the bacterial peptidoglycan. The polypeptide is Diaminopimelate epimerase (Chelativorans sp. (strain BNC1)).